Consider the following 338-residue polypeptide: Ketol-acid reductoisomerase (NADP(+)) (338 aa).

Residues 1–181 (MKVYYDKDAD…GGTKGGVIET (181 aa)) enclose the KARI N-terminal Rossmann domain. Residues 24 to 27 (YGSQ), arginine 47, and serine 52 contribute to the NADP(+) site. Residue histidine 107 is part of the active site. NADP(+) is bound at residue glycine 133. One can recognise a KARI C-terminal knotted domain in the interval 182 to 327 (NFREETETDL…SQLRAMMPWI (146 aa)). Residues aspartate 190, glutamate 194, glutamate 226, and glutamate 230 each coordinate Mg(2+). Position 251 (serine 251) interacts with substrate.

The protein belongs to the ketol-acid reductoisomerase family. The cofactor is Mg(2+).

The catalysed reaction is (2R)-2,3-dihydroxy-3-methylbutanoate + NADP(+) = (2S)-2-acetolactate + NADPH + H(+). The enzyme catalyses (2R,3R)-2,3-dihydroxy-3-methylpentanoate + NADP(+) = (S)-2-ethyl-2-hydroxy-3-oxobutanoate + NADPH + H(+). The protein operates within amino-acid biosynthesis; L-isoleucine biosynthesis; L-isoleucine from 2-oxobutanoate: step 2/4. It participates in amino-acid biosynthesis; L-valine biosynthesis; L-valine from pyruvate: step 2/4. Functionally, involved in the biosynthesis of branched-chain amino acids (BCAA). Catalyzes an alkyl-migration followed by a ketol-acid reduction of (S)-2-acetolactate (S2AL) to yield (R)-2,3-dihydroxy-isovalerate. In the isomerase reaction, S2AL is rearranged via a Mg-dependent methyl migration to produce 3-hydroxy-3-methyl-2-ketobutyrate (HMKB). In the reductase reaction, this 2-ketoacid undergoes a metal-dependent reduction by NADPH to yield (R)-2,3-dihydroxy-isovalerate. The protein is Ketol-acid reductoisomerase (NADP(+)) of Methylobacillus flagellatus (strain ATCC 51484 / DSM 6875 / VKM B-1610 / KT).